Here is a 95-residue protein sequence, read N- to C-terminus: Small ribosomal subunit protein bS6 (95 aa).

This sequence belongs to the bacterial ribosomal protein bS6 family.

Functionally, binds together with bS18 to 16S ribosomal RNA. In Clostridium perfringens (strain ATCC 13124 / DSM 756 / JCM 1290 / NCIMB 6125 / NCTC 8237 / Type A), this protein is Small ribosomal subunit protein bS6.